The following is a 106-amino-acid chain: Iron-sulfur cluster assembly protein CyaY (106 aa).

The protein belongs to the frataxin family.

Its function is as follows. Involved in iron-sulfur (Fe-S) cluster assembly. May act as a regulator of Fe-S biogenesis. This Salmonella typhimurium (strain LT2 / SGSC1412 / ATCC 700720) protein is Iron-sulfur cluster assembly protein CyaY.